The following is a 302-amino-acid chain: m7GpppN-mRNA hydrolase NUDT17 (302 aa).

A Nudix hydrolase domain is found at 89-237 (GRGVDLGVAV…DGTETPKHLP (149 aa)). Residues 128–149 (GHVEPDEELLDGGLRELWEESG) carry the Nudix box motif. The Mg(2+) site is built by glutamate 143 and glutamate 147.

The protein belongs to the Nudix hydrolase family. Requires Mg(2+) as cofactor. It depends on Mn(2+) as a cofactor.

The enzyme catalyses a 5'-end (N(7)-methyl 5'-triphosphoguanosine)-ribonucleoside in mRNA + H2O = N(7)-methyl-GDP + a 5'-end phospho-ribonucleoside in mRNA + 2 H(+). In terms of biological role, acts as a decapping enzyme capable of hydrolyzing monomethylated capped RNAs (in vitro). Hydrolyzes monomethylated capped RNA after alpha and beta phosphates to form N(7)-methyl-GDP. Shows low activity towards unmethylated capped RNA. The chain is m7GpppN-mRNA hydrolase NUDT17 (NUDT17) from Bos taurus (Bovine).